The following is a 326-amino-acid chain: Pyruvate dehydrogenase E1 component subunit beta (326 aa).

Residue Glu62 coordinates thiamine diphosphate.

As to quaternary structure, heterodimer of an alpha and a beta chain. Requires thiamine diphosphate as cofactor.

The enzyme catalyses N(6)-[(R)-lipoyl]-L-lysyl-[protein] + pyruvate + H(+) = N(6)-[(R)-S(8)-acetyldihydrolipoyl]-L-lysyl-[protein] + CO2. Functionally, the pyruvate dehydrogenase complex catalyzes the overall conversion of pyruvate to acetyl-CoA and CO(2). It contains multiple copies of three enzymatic components: pyruvate dehydrogenase (E1), dihydrolipoamide acetyltransferase (E2) and lipoamide dehydrogenase (E3). The polypeptide is Pyruvate dehydrogenase E1 component subunit beta (pdhB) (Mycoplasma genitalium (strain ATCC 33530 / DSM 19775 / NCTC 10195 / G37) (Mycoplasmoides genitalium)).